Consider the following 291-residue polypeptide: S-methyl-5'-thioadenosine phosphorylase (291 aa).

Residues Ser-12, Arg-54–His-55, and Ser-87–Ala-88 contribute to the phosphate site. Position 185 (Met-185) interacts with substrate. Thr-186 is a phosphate binding site. Substrate is bound at residue Asp-209 to Asp-211.

This sequence belongs to the PNP/MTAP phosphorylase family. MTAP subfamily. In terms of assembly, homohexamer. Dimer of a homotrimer.

It catalyses the reaction S-methyl-5'-thioadenosine + phosphate = 5-(methylsulfanyl)-alpha-D-ribose 1-phosphate + adenine. It participates in amino-acid biosynthesis; L-methionine biosynthesis via salvage pathway; S-methyl-5-thio-alpha-D-ribose 1-phosphate from S-methyl-5'-thioadenosine (phosphorylase route): step 1/1. Catalyzes the reversible phosphorylation of S-methyl-5'-thioadenosine (MTA) to adenine and 5-methylthioribose-1-phosphate. Involved in the breakdown of MTA, a major by-product of polyamine biosynthesis. Responsible for the first step in the methionine salvage pathway after MTA has been generated from S-adenosylmethionine. Has broad substrate specificity with 6-aminopurine nucleosides as preferred substrates. The polypeptide is S-methyl-5'-thioadenosine phosphorylase (Bradyrhizobium diazoefficiens (strain JCM 10833 / BCRC 13528 / IAM 13628 / NBRC 14792 / USDA 110)).